Reading from the N-terminus, the 211-residue chain is Metalloproteinase inhibitor 3 (211 aa).

An N-terminal signal peptide occupies residues 1-23; it reads MTPWLGLVVLLSCWSLGHWGTEA. Residue cysteine 24 coordinates Zn(2+). Involved in metalloproteinase-binding stretches follow at residues 24–27 and 88–89; these read CTCS and ES. Cystine bridges form between cysteine 24-cysteine 91, cysteine 26-cysteine 118, cysteine 36-cysteine 143, cysteine 145-cysteine 192, cysteine 150-cysteine 155, and cysteine 163-cysteine 184. An NTR domain is found at 24–143; it reads CTCSPSHPQD…GLNYRYHLGC (120 aa). Residues 105-188 form a mediates interaction with EFEMP1 region; it reads TGRVYEGKMY…SKHYACIRQK (84 aa).

Belongs to the protease inhibitor I35 (TIMP) family. Interacts with EFEMP1. Interacts with KDR.

Its subcellular location is the secreted. The protein resides in the extracellular space. It localises to the extracellular matrix. In terms of biological role, mediates a variety of processes including matrix regulation and turnover, inflammation, and angiogenesis, through reversible inhibition of zinc protease superfamily enzymes, primarily matrix metalloproteinases (MMPs). Regulates extracellular matrix (ECM) remodeling through inhibition of matrix metalloproteinases (MMP) including MMP-1, MMP-2, MMP-3, MMP-7, MMP-9, MMP-13, MMP-14 and MMP-15. Additionally, modulates the processing of amyloid precursor protein (APP) and apolipoprotein E receptor ApoER2 by inhibiting two alpha-secretases ADAM10 and ADAM17. Functions as a tumor suppressor and a potent inhibitor of angiogenesis. Exerts its anti-angiogenic effect by directly interacting with vascular endothelial growth factor (VEGF) receptor-2/KDR, preventing its binding to the VEGFA ligand. Selectively induces apoptosis in angiogenic endothelial cells through a caspase-independent cell death pathway. Mechanistically, inhibits matrix-induced focal adhesion kinase PTK2 tyrosine phosphorylation and association with paxillin/PXN and disrupts the incorporation of ITGB3, PTK2 and PXN into focal adhesion contacts on the matrix. This chain is Metalloproteinase inhibitor 3 (Timp3), found in Rattus norvegicus (Rat).